Here is an 831-residue protein sequence, read N- to C-terminus: Periplasmic nitrate reductase (831 aa).

The segment at residues 1 to 35 (MTISDSRRTFLKASAAAATASAAGIPLANGTAAEA) is a signal peptide (tat-type signal). Positions 42–98 (IRWDKAACRFCGTGCSVLVGTKEGRVVATQGDPDAPVNRGLNCIKGYFLSKIMYGED) constitute a 4Fe-4S Mo/W bis-MGD-type domain. [4Fe-4S] cluster is bound by residues C49, C52, C56, and C84. Mo-bis(molybdopterin guanine dinucleotide)-binding positions include K86, Q153, N178, C182, 215–222 (WGSNMAEM), 246–250 (STYEH), 265–267 (QTD), M375, Q379, N485, 511–512 (SD), K534, D561, and 721–730 (TGRVLEHWHS). Substrate is bound at residue W797. Residues N805 and K822 each contribute to the Mo-bis(molybdopterin guanine dinucleotide) site.

This sequence belongs to the prokaryotic molybdopterin-containing oxidoreductase family. NasA/NapA/NarB subfamily. As to quaternary structure, component of the periplasmic nitrate reductase NapAB complex composed of NapA and NapB. [4Fe-4S] cluster is required as a cofactor. It depends on Mo-bis(molybdopterin guanine dinucleotide) as a cofactor. In terms of processing, predicted to be exported by the Tat system. The position of the signal peptide cleavage has not been experimentally proven.

Its subcellular location is the periplasm. It carries out the reaction 2 Fe(II)-[cytochrome] + nitrate + 2 H(+) = 2 Fe(III)-[cytochrome] + nitrite + H2O. In terms of biological role, catalytic subunit of the periplasmic nitrate reductase complex NapAB. Receives electrons from NapB and catalyzes the reduction of nitrate to nitrite. This is Periplasmic nitrate reductase from Dinoroseobacter shibae (strain DSM 16493 / NCIMB 14021 / DFL 12).